A 471-amino-acid chain; its full sequence is MKLPKAIGLVHFIGIGGIGMSGIAEVLHNLGHKVQGSDQSDSANVQRLREKGIEVFVGHRAENLGDAEVVVVSTAIRKSNPELIAAREKLLPVVRRAEMLAELMRFRNAIAIGGTHGKTTTTSLVATLLEAGGLDPTVINGGIINAYGTNARMGEGEWMVVEADESDGTFLKLPADVAVITNIDPEHLDHYGNFDAVRAAFRQFVENVPFYGFGVMCLDHPEVQSLVGRIEDRKIITYGENPQADVRFKNVRIDGTRSIFDVEIRRRRTGQRTELKGLVMPMPGRHNISNATAAIAVANRLGISSEDIAKGLASFGGVKRRFTLTGEWNGVQIFDDYGHHPVEIKAVLKAAREACKGRIIAVHQPHRYTRLASLFEEFAACFNDADSILLAPVYAAGEDAIEGVDSTSLVSRIKSGGHRDARFLSSAELLPEMVAEVAKPGDFVVLLGAGSITSWAAALPKQLEGLSGKSA.

Residue 114 to 120 (GTHGKTT) coordinates ATP.

Belongs to the MurCDEF family.

The protein localises to the cytoplasm. The catalysed reaction is UDP-N-acetyl-alpha-D-muramate + L-alanine + ATP = UDP-N-acetyl-alpha-D-muramoyl-L-alanine + ADP + phosphate + H(+). Its pathway is cell wall biogenesis; peptidoglycan biosynthesis. Functionally, cell wall formation. This Rhizobium etli (strain ATCC 51251 / DSM 11541 / JCM 21823 / NBRC 15573 / CFN 42) protein is UDP-N-acetylmuramate--L-alanine ligase.